Consider the following 226-residue polypeptide: High affinity heme transporter (226 aa).

The N-terminal stretch at 1 to 20 is a signal peptide; it reads MISLKIYFVLIFLFLKGINS. A heme binding region spans residues 72 to 101; it reads CDTTILSETNNVTGSCYVANCANDTVLEIC. A lipid anchor (GPI-anchor amidated serine) is attached at serine 199. Residues 200–226 constitute a propeptide, removed in mature form; that stretch reads SASSTIFKPSYFISCLLSVGLYLVLNF.

The protein resides in the cell membrane. It is found in the vacuole membrane. In terms of biological role, high affinity heme transporter involved in the assimilation of exogenous heme during conditions of low cellular iron. This chain is High affinity heme transporter, found in Schizosaccharomyces pombe (strain 972 / ATCC 24843) (Fission yeast).